The primary structure comprises 304 residues: Opsin-1 (304 aa).

Residues 1–45 (MIHPEQVADMLRPTTSTTSSHVPGPVPTVVPTPTEYQTLGETGHR) are Extracellular-facing. A helical transmembrane segment spans residues 46–66 (TLWVTFALMVLSSGIFALLSW). A helical membrane pass occupies residues 74-94 (LFHVITTLITVVASLSYFAMA). A helical transmembrane segment spans residues 129–149 (YVDWALTTPLLLLELCLLAGV). Residues 154 to 174 (TLMAIVADVIMVLCGLFAALG) form a helical membrane-spanning segment. The helical transmembrane segment at 183–203 (WGWYTIGCFSYLFVIWHVALH) threads the bilayer. The chain crosses the membrane as a helical span at residues 219–239 (FTGLAVFALLLWTAYPIIWGI). A helical membrane pass occupies residues 252–272 (ILIYTVLDLLAKPVFGFWLLL). Lysine 263 is modified (N6-(retinylidene)lysine). The Cytoplasmic portion of the chain corresponds to 273–304 (SHRAMPETNIDLPGYWSHGLATEGRIRIGEED).

Belongs to the archaeal/bacterial/fungal opsin family. Post-translationally, binds all-trans retinal via a protonated Schiff base linkage.

The protein localises to the membrane. Functionally, could facilitate a sensory photoresponse. The polypeptide is Opsin-1 (nop-1) (Neurospora crassa (strain ATCC 24698 / 74-OR23-1A / CBS 708.71 / DSM 1257 / FGSC 987)).